The sequence spans 274 residues: 4-diphosphocytidyl-2-C-methyl-D-erythritol kinase (274 aa).

The active site involves lysine 8. Proline 94–serine 104 contacts ATP. Aspartate 136 is a catalytic residue.

The protein belongs to the GHMP kinase family. IspE subfamily.

It carries out the reaction 4-CDP-2-C-methyl-D-erythritol + ATP = 4-CDP-2-C-methyl-D-erythritol 2-phosphate + ADP + H(+). It participates in isoprenoid biosynthesis; isopentenyl diphosphate biosynthesis via DXP pathway; isopentenyl diphosphate from 1-deoxy-D-xylulose 5-phosphate: step 3/6. Catalyzes the phosphorylation of the position 2 hydroxy group of 4-diphosphocytidyl-2C-methyl-D-erythritol. The polypeptide is 4-diphosphocytidyl-2-C-methyl-D-erythritol kinase (Bacteroides thetaiotaomicron (strain ATCC 29148 / DSM 2079 / JCM 5827 / CCUG 10774 / NCTC 10582 / VPI-5482 / E50)).